The primary structure comprises 67 residues: Large ribosomal subunit protein bL35 (67 aa).

The protein belongs to the bacterial ribosomal protein bL35 family.

The chain is Large ribosomal subunit protein bL35 from Sinorhizobium medicae (strain WSM419) (Ensifer medicae).